A 151-amino-acid polypeptide reads, in one-letter code: D-aminoacyl-tRNA deacylase (151 aa).

Positions 136 to 137 (GP) match the Gly-cisPro motif, important for rejection of L-amino acids motif.

It belongs to the DTD family. As to quaternary structure, homodimer.

It localises to the cytoplasm. The catalysed reaction is glycyl-tRNA(Ala) + H2O = tRNA(Ala) + glycine + H(+). The enzyme catalyses a D-aminoacyl-tRNA + H2O = a tRNA + a D-alpha-amino acid + H(+). An aminoacyl-tRNA editing enzyme that deacylates mischarged D-aminoacyl-tRNAs. Also deacylates mischarged glycyl-tRNA(Ala), protecting cells against glycine mischarging by AlaRS. Acts via tRNA-based rather than protein-based catalysis; rejects L-amino acids rather than detecting D-amino acids in the active site. By recycling D-aminoacyl-tRNA to D-amino acids and free tRNA molecules, this enzyme counteracts the toxicity associated with the formation of D-aminoacyl-tRNA entities in vivo and helps enforce protein L-homochirality. In Lactococcus lactis subsp. cremoris (strain SK11), this protein is D-aminoacyl-tRNA deacylase.